We begin with the raw amino-acid sequence, 682 residues long: DNA-directed RNA polymerase subunit beta' (682 aa).

Residues Cys-69, Cys-71, Cys-87, and Cys-90 each contribute to the Zn(2+) site. Positions 489, 491, and 493 each coordinate Mg(2+).

It belongs to the RNA polymerase beta' chain family. RpoC1 subfamily. In plastids the minimal PEP RNA polymerase catalytic core is composed of four subunits: alpha, beta, beta', and beta''. When a (nuclear-encoded) sigma factor is associated with the core the holoenzyme is formed, which can initiate transcription. The cofactor is Mg(2+). Zn(2+) serves as cofactor.

The protein localises to the plastid. The protein resides in the chloroplast. It carries out the reaction RNA(n) + a ribonucleoside 5'-triphosphate = RNA(n+1) + diphosphate. In terms of biological role, DNA-dependent RNA polymerase catalyzes the transcription of DNA into RNA using the four ribonucleoside triphosphates as substrates. The sequence is that of DNA-directed RNA polymerase subunit beta' from Acorus calamus var. americanus (American sweet flag).